A 365-amino-acid chain; its full sequence is Flavone synthase (365 aa).

Histidine 76, histidine 218, aspartate 220, and histidine 276 together coordinate Fe cation. The Fe2OG dioxygenase domain maps to 194-295 (MEQKVLINYY…RLSIATFQNP (102 aa)). Residues 345 to 365 (RLQDEKAKLEMKSKSADENLA) are disordered.

It belongs to the iron/ascorbate-dependent oxidoreductase family. Fe cation is required as a cofactor. Requires L-ascorbate as cofactor.

It localises to the cytoplasm. The enzyme catalyses a flavanone + 2-oxoglutarate + O2 = a flavone + succinate + CO2 + H2O. The protein operates within secondary metabolite biosynthesis; flavonoid biosynthesis. Functionally, involved in the conversion of naringenin to apigenin. Acts via a direct 2,3-desaturation of flavanones instead of a sequential hydroxylation/dehydratation mechanism. This chain is Flavone synthase (FNSI), found in Petroselinum crispum (Parsley).